The sequence spans 75 residues: Porwaprin-d (75 aa).

Positions Met1–Ser24 are cleaved as a signal peptide. In terms of domain architecture, WAP spans Arg27–Ile72. 4 disulfides stabilise this stretch: Cys34–Cys60, Cys43–Cys64, Cys47–Cys59, and Cys53–Cys68.

It belongs to the venom waprin family. In terms of tissue distribution, expressed by the venom gland.

It localises to the secreted. Its function is as follows. Damages membranes of susceptible bacteria. Has no hemolytic activity. Not toxic to mice. Does not inhibit the proteinases elastase and cathepsin G. This chain is Porwaprin-d, found in Pseudechis porphyriacus (Red-bellied black snake).